Reading from the N-terminus, the 112-residue chain is Protein new-glue 2 (112 aa).

The first 24 residues, M1–A24, serve as a signal peptide directing secretion. A compositionally biased stretch (low complexity) spans A24–S69. The disordered stretch occupies residues A24–E112. A run of 4 repeats spans residues T31–T38, T39–T46, T47–T54, and T55–T62. Positions T31–T62 are 4 X 8 AA tandem repeats of T-S-A-S-A-T-T-T. The span at S70–E112 shows a compositional bias: basic residues.

To NG-1, also to SGS-3. As to expression, salivary gland specific.

The protein resides in the secreted. The protein is Protein new-glue 2 (ng2) of Drosophila melanogaster (Fruit fly).